The chain runs to 224 residues: Small ribosomal subunit protein uS3 (224 aa).

A KH type-2 domain is found at 38 to 106 (LREFVKEKLG…EVYLNVVEVR (69 aa)).

It belongs to the universal ribosomal protein uS3 family. Part of the 30S ribosomal subunit. Forms a tight complex with proteins S10 and S14.

Binds the lower part of the 30S subunit head. Binds mRNA in the 70S ribosome, positioning it for translation. The protein is Small ribosomal subunit protein uS3 of Anaeromyxobacter dehalogenans (strain 2CP-1 / ATCC BAA-258).